Consider the following 300-residue polypeptide: Estradiol 17-beta-dehydrogenase 11 (300 aa).

A signal peptide spans Met1 to Cys18. Position 40–67 (Leu40–Asp67) interacts with NADP(+). Position 172 (Ser172) interacts with substrate. The active-site Proton acceptor is Tyr185. Lys189 is an NADP(+) binding site.

It belongs to the short-chain dehydrogenases/reductases (SDR) family. 17-beta-HSD 3 subfamily.

It is found in the endoplasmic reticulum. The protein resides in the lipid droplet. It catalyses the reaction 17beta-estradiol + NAD(+) = estrone + NADH + H(+). It carries out the reaction 17beta-estradiol + NADP(+) = estrone + NADPH + H(+). Can convert androstan-3-alpha,17-beta-diol (3-alpha-diol) to androsterone in vitro, suggesting that it may participate in androgen metabolism during steroidogenesis. May act by metabolizing compounds that stimulate steroid synthesis and/or by generating metabolites that inhibit it. Has no activity toward DHEA (dehydroepiandrosterone), or A-dione (4-androste-3,17-dione), and only a slight activity toward testosterone to A-dione. This chain is Estradiol 17-beta-dehydrogenase 11 (HSD17B11), found in Macaca fascicularis (Crab-eating macaque).